A 355-amino-acid chain; its full sequence is 3-dehydroquinate synthase (355 aa).

NAD(+)-binding positions include 71 to 76 (EGEERK), 105 to 109 (GVVGD), 129 to 130 (TS), Lys-142, and Lys-151. Zn(2+) is bound by residues Glu-184, His-246, and His-263.

This sequence belongs to the sugar phosphate cyclases superfamily. Dehydroquinate synthase family. Co(2+) is required as a cofactor. It depends on Zn(2+) as a cofactor. NAD(+) serves as cofactor.

It is found in the cytoplasm. It catalyses the reaction 7-phospho-2-dehydro-3-deoxy-D-arabino-heptonate = 3-dehydroquinate + phosphate. It participates in metabolic intermediate biosynthesis; chorismate biosynthesis; chorismate from D-erythrose 4-phosphate and phosphoenolpyruvate: step 2/7. In terms of biological role, catalyzes the conversion of 3-deoxy-D-arabino-heptulosonate 7-phosphate (DAHP) to dehydroquinate (DHQ). The chain is 3-dehydroquinate synthase from Streptococcus pneumoniae (strain JJA).